A 152-amino-acid polypeptide reads, in one-letter code: Ribosome maturation factor RimP (152 aa).

The protein belongs to the RimP family.

The protein localises to the cytoplasm. Required for maturation of 30S ribosomal subunits. This is Ribosome maturation factor RimP from Burkholderia cenocepacia (strain ATCC BAA-245 / DSM 16553 / LMG 16656 / NCTC 13227 / J2315 / CF5610) (Burkholderia cepacia (strain J2315)).